The chain runs to 225 residues: MSTFKSLSLSALLFIAFLFTCARGATFNIINNCPFTVWAAAVPGGGKRLDRGQNWIINPGAGTKGARVWARTGCNFDGAGRGKCQTGDCNGLLQCQAFGQPPNTLAEYALNQFNNLDFFDISLVDGFNVAMEFSPTSGGCTRGIKCTANINEQCPNELRAPGGCNNPCTVFKTDQYCCNSGNCGPTDYSRFFKTRCPDAYSYPKDDQTSTFTCPGGTNYKVVFCP.

The N-terminal stretch at 1 to 24 (MSTFKSLSLSALLFIAFLFTCARG) is a signal peptide. Disulfide bonds link cysteine 33–cysteine 224, cysteine 74–cysteine 84, cysteine 89–cysteine 95, cysteine 140–cysteine 213, cysteine 146–cysteine 196, cysteine 154–cysteine 164, cysteine 168–cysteine 177, and cysteine 178–cysteine 183.

Belongs to the thaumatin family. Post-translationally, N-glycosylated.

Its subcellular location is the secreted. In terms of biological role, has antifungal activity against B.cinerea, C.comatus, M.arachidicola, P.piricola, C.albicans and S.carlsbergensis. Inhibits HIV-1 reverse transcriptase. The protein is Thaumatin-like protein of Actinidia chinensis var. chinensis (Chinese soft-hair kiwi).